Reading from the N-terminus, the 236-residue chain is Small ribosomal subunit protein uS2c (236 aa).

It belongs to the universal ribosomal protein uS2 family.

The protein resides in the plastid. It is found in the chloroplast. The chain is Small ribosomal subunit protein uS2c (rps2) from Ceratophyllum demersum (Rigid hornwort).